We begin with the raw amino-acid sequence, 253 residues long: Phycocyanobilin:ferredoxin oxidoreductase (253 aa).

This sequence belongs to the HY2 family.

It carries out the reaction (2R,3Z)-phycocyanobilin + 4 oxidized [2Fe-2S]-[ferredoxin] = biliverdin IXalpha + 4 reduced [2Fe-2S]-[ferredoxin] + 4 H(+). Catalyzes the four-electron reduction of biliverdin IX-alpha (2-electron reduction at both the A and D rings); the reaction proceeds via an isolatable 2-electron intermediate, 181,182-dihydrobiliverdin. This Gloeobacter violaceus (strain ATCC 29082 / PCC 7421) protein is Phycocyanobilin:ferredoxin oxidoreductase (pcyA).